An 838-amino-acid chain; its full sequence is Alpha-glucan phosphorylase, H isozyme (838 aa).

A disordered region spans residues 1–21 (MEGGAKSNDVSAAPIAQPLSE). Position 684 is an N6-(pyridoxal phosphate)lysine (Lys-684).

This sequence belongs to the glycogen phosphorylase family. Requires pyridoxal 5'-phosphate as cofactor.

It localises to the cytoplasm. The enzyme catalyses [(1-&gt;4)-alpha-D-glucosyl](n) + phosphate = [(1-&gt;4)-alpha-D-glucosyl](n-1) + alpha-D-glucose 1-phosphate. Its function is as follows. Phosphorylase is an important allosteric enzyme in carbohydrate metabolism. Enzymes from different sources differ in their regulatory mechanisms and in their natural substrates. However, all known phosphorylases share catalytic and structural properties. This Solanum tuberosum (Potato) protein is Alpha-glucan phosphorylase, H isozyme.